The chain runs to 79 residues: Morintide mO2 (79 aa).

The signal sequence occupies residues 1–20 (MAKLSFLSLFLLCLVATATA). Positions 21–63 (QNCGRQAGNRACANGLCCSQYGFCGSTSEYCSRANGCQSNCRG) constitute a Chitin-binding type-1 domain. 4 cysteine pairs are disulfide-bonded: Cys23/Cys38, Cys32/Cys44, Cys37/Cys51, and Cys57/Cys61. A propeptide spanning residues 64–79 (GGGAGGAGGGAGGGSP) is cleaved from the precursor.

Leaves (at protein level).

Its function is as follows. Chitin-binding protein which functions in defense against chitin-containing fungal pathogens. The chain is Morintide mO2 from Moringa oleifera (Horseradish tree).